The following is a 527-amino-acid chain: MHDQEAANGGETATNPISSLDVPTPPATTIPTLSSPAPLLRPAIPGARSAGARTPRLGLAIPPSPNVKPVGGAPGRPPLPTLHLATPMGSSVTPHEQPPGRPSIVTQQGQSASGGSESSAAHSRSGSFGPLDGRTSNPTSAGSQYSALSFASHFGIGSTRPQGTPDPASAVGSIYSERSDGGAGMDKDGNLKGLENFDKLTIDKARTADVEDLDVEGWKIASMEKRIVELGGLGEGAGGAVTRCKLTGGKTVFALKVITANPDPDVKKQIMRELDFNIQCASEHICRYYGAFEDPSTATISIAMEFCEGGSLDSIYKEVKRLGGRTGEKVLGKIAEGVLRGLTYLNSKKIIHRDIKPSNILLCRNGDVKLCDFGVSGDFGTKGEANTFIGTSYYMAPERITGQSYTITSDVWSTGVTLLEVAQHRFPFPADGTEMAPRAGLIDLLTYIVRQPIPKLKDEPSAQISWSENFKYFIECCLEKDPQRRASPWRMLEHPWMVDMKSKRVNMTRYLAQVWGWDDKGEAKPAE.

2 disordered regions span residues methionine 1–serine 143 and isoleucine 156–glycine 189. The segment covering glutamine 107 to glycine 129 has biased composition (low complexity). Residues arginine 134–serine 143 are compositionally biased toward polar residues. Over residues glutamate 177–glycine 189 the composition is skewed to basic and acidic residues. One can recognise a Protein kinase domain in the interval isoleucine 227–methionine 497. Residues leucine 233 to valine 241 and lysine 256 each bind ATP.

The protein belongs to the protein kinase superfamily. STE Ser/Thr protein kinase family. MAP kinase kinase subfamily. As to quaternary structure, interacts with the adapter protein MST50.

It carries out the reaction L-seryl-[protein] + ATP = O-phospho-L-seryl-[protein] + ADP + H(+). The enzyme catalyses L-threonyl-[protein] + ATP = O-phospho-L-threonyl-[protein] + ADP + H(+). Mitogen-activated protein kinase kinase; part of the MCK1-MKK2-MPS1 MAP kinase (MAPK) signal transduction cascade that is essential for appressorium formation, penetration and invasive growth. Beside its role in pathogenesis, the MPS1 cascade is active in conidiation and cellular stress responses. Targets downstream of the the MPS1-MAPK pathway include transcription factors MIG1 and SWI6, as well as GSK1 and MPG1. This Pyricularia oryzae (strain 70-15 / ATCC MYA-4617 / FGSC 8958) (Rice blast fungus) protein is Mitogen-activated protein kinase kinae MKK2.